The chain runs to 395 residues: Imidazolonepropionase (395 aa).

Residues H63 and H65 each coordinate Fe(3+). Zn(2+) contacts are provided by H63 and H65. Residues R72, Y135, and H168 each coordinate 4-imidazolone-5-propanoate. Position 135 (Y135) interacts with N-formimidoyl-L-glutamate. H233 is a Fe(3+) binding site. H233 lines the Zn(2+) pocket. Residue Q236 coordinates 4-imidazolone-5-propanoate. D308 is a binding site for Fe(3+). Residue D308 participates in Zn(2+) binding. 2 residues coordinate N-formimidoyl-L-glutamate: N310 and G312. T313 contributes to the 4-imidazolone-5-propanoate binding site.

It belongs to the metallo-dependent hydrolases superfamily. HutI family. The cofactor is Zn(2+). Fe(3+) is required as a cofactor.

It localises to the cytoplasm. It carries out the reaction 4-imidazolone-5-propanoate + H2O = N-formimidoyl-L-glutamate. The protein operates within amino-acid degradation; L-histidine degradation into L-glutamate; N-formimidoyl-L-glutamate from L-histidine: step 3/3. Functionally, catalyzes the hydrolytic cleavage of the carbon-nitrogen bond in imidazolone-5-propanoate to yield N-formimidoyl-L-glutamate. It is the third step in the universal histidine degradation pathway. The protein is Imidazolonepropionase of Cereibacter sphaeroides (strain KD131 / KCTC 12085) (Rhodobacter sphaeroides).